We begin with the raw amino-acid sequence, 525 residues long: DNA damage-binding protein CMR1 (525 aa).

2 disordered regions span residues 38–86 (AGIF…AESE) and 212–233 (GILD…EYPD). Over residues 53–62 (TKKKPAPKRV) the composition is skewed to basic residues. 7 WD repeats span residues 183–224 (ITRE…DQNE), 241–281 (PHTN…ATEA), 288–328 (SDDE…KANP), 339–379 (LSEK…TKHP), 384–425 (EHES…KDWK), 448–491 (GKWV…LAQL), and 494–525 (DVIT…CLWM). The span at 223 to 232 (NESDEEDEYP) shows a compositional bias: acidic residues.

The protein belongs to the WD repeat DDB2/WDR76 family.

In terms of biological role, DNA-binding protein that binds to both single- and double-stranded DNA. Binds preferentially to UV-damaged DNA. May be involved in DNA-metabolic processes. This is DNA damage-binding protein CMR1 from Coccidioides immitis (strain RS) (Valley fever fungus).